A 113-amino-acid chain; its full sequence is CRISPR-associated endoribonuclease Cas2 (113 aa).

Asp-33 is a Mg(2+) binding site.

Belongs to the CRISPR-associated endoribonuclease Cas2 protein family. Homodimer, forms a heterotetramer with a Cas1 homodimer. It depends on Mg(2+) as a cofactor.

CRISPR (clustered regularly interspaced short palindromic repeat), is an adaptive immune system that provides protection against mobile genetic elements (viruses, transposable elements and conjugative plasmids). CRISPR clusters contain sequences complementary to antecedent mobile elements and target invading nucleic acids. CRISPR clusters are transcribed and processed into CRISPR RNA (crRNA). Functions as a ssRNA-specific endoribonuclease. Involved in the integration of spacer DNA into the CRISPR cassette. The type III-A Csm effector complex binds crRNA and acts as a crRNA-guided RNase, DNase and cyclic oligoadenylate synthase; binding of target RNA cognate to the crRNA is required for all activities. This Mycobacterium tuberculosis (strain CDC 1551 / Oshkosh) protein is CRISPR-associated endoribonuclease Cas2.